Here is a 157-residue protein sequence, read N- to C-terminus: UPF0178 protein BH1374 (157 aa).

This sequence belongs to the UPF0178 family.

The protein is UPF0178 protein BH1374 of Halalkalibacterium halodurans (strain ATCC BAA-125 / DSM 18197 / FERM 7344 / JCM 9153 / C-125) (Bacillus halodurans).